The primary structure comprises 1095 residues: Tyrosine-sulfated glycopeptide receptor 1 (1095 aa).

The chain crosses the membrane as a helical span at residues 23–43 (PHMVLFVLLYVLSISVFFLTV). Residues asparagine 62 and asparagine 73 are each glycosylated (N-linked (GlcNAc...) asparagine). LRR repeat units lie at residues 91–115 (ENRV…VLDL), 116–139 (QRLS…FLSA), 141–165 (DQLL…SFGN), 170–195 (IFPI…VFLQ), 197–221 (AFNL…MCTA), 223–246 (PQLT…LSRC), 247–270 (SRLS…IYNL), 271–294 (PELE…ITRL), 295–318 (TKLT…IGKL), 320–342 (KLSS…LANC), 344–366 (KLVK…DFSR), 367–391 (FQSL…VYSC), 393–415 (MMTA…VLEL), 416–439 (ESLS…SILQ), 441–466 (CKKL…DFLR), 470–494 (FPSL…LIKL), 495–517 (QRVE…WLGT), 518–542 (LPDL…LFQL), and 566–589 (NPNN…IYIK). A glycan (N-linked (GlcNAc...) asparagine) is linked at asparagine 165. Residues asparagine 199, asparagine 204, and asparagine 207 are each glycosylated (N-linked (GlcNAc...) asparagine). Residue asparagine 258 is glycosylated (N-linked (GlcNAc...) asparagine). The N-linked (GlcNAc...) asparagine glycan is linked to asparagine 341. The N-linked (GlcNAc...) asparagine glycan is linked to asparagine 377. An N-linked (GlcNAc...) asparagine glycan is attached at asparagine 430. 7 N-linked (GlcNAc...) asparagine glycosylation sites follow: asparagine 569, asparagine 592, asparagine 616, asparagine 627, asparagine 640, asparagine 662, and asparagine 714. LRR repeat units lie at residues 604 to 628 (LKVL…LSNL), 629 to 652 (TNLE…LTGL), and 654 to 677 (FLSY…QFDT). A helical transmembrane segment spans residues 721 to 741 (LVLGLFFGVSLILVLLALLVL). Phosphothreonine is present on residues threonine 792 and threonine 800. Positions 803 to 1074 (FSQANIIGCG…PNIQQVVDWL (272 aa)) constitute a Protein kinase domain. Residues 809 to 817 (IGCGGFGLV) and lysine 831 contribute to the ATP site. Phosphotyrosine is present on residues tyrosine 876 and tyrosine 916. The active-site Proton acceptor is the aspartate 929. Tyrosine 971 is subject to Phosphotyrosine.

It belongs to the protein kinase superfamily. Ser/Thr protein kinase family. As to quaternary structure, homo- and heterodimers with PSKR1. Interacts (via C-terminus) with AHA1 and AHA2 (via the R-domain). In terms of processing, autophosphorylated. As to expression, expressed ubiquitously, including in the shoot apical meristem and in the elongation zone of the root meristem.

It localises to the cell membrane. The enzyme catalyses L-seryl-[protein] + ATP = O-phospho-L-seryl-[protein] + ADP + H(+). It carries out the reaction L-threonyl-[protein] + ATP = O-phospho-L-threonyl-[protein] + ADP + H(+). Functionally, tyrosine-sulfated glycopeptide receptor with a serine/threonine-protein kinase activity. Regulates, in response to tyrosine-sulfated glycopeptide binding, a signaling cascade involved in cellular proliferation and plant growth. Not involved in PSK perception. Involved in plant immunity, with antagonistic effects on bacterial and fungal resistances. Mediates activation of the plasma membrane H(+)-ATPase by PSY1. Phosphorylates AHA2 at Thr-881. The protein is Tyrosine-sulfated glycopeptide receptor 1 of Arabidopsis thaliana (Mouse-ear cress).